The sequence spans 243 residues: Probable enoyl-CoA hydratase echA6 (243 aa).

It belongs to the enoyl-CoA hydratase/isomerase family.

The enzyme catalyses a (3S)-3-hydroxyacyl-CoA = a (2E)-enoyl-CoA + H2O. It catalyses the reaction a 4-saturated-(3S)-3-hydroxyacyl-CoA = a (3E)-enoyl-CoA + H2O. Its function is as follows. Could possibly oxidize fatty acids using specific components. This Mycobacterium bovis (strain ATCC BAA-935 / AF2122/97) protein is Probable enoyl-CoA hydratase echA6 (echA6).